The sequence spans 478 residues: ATP synthase subunit beta (478 aa).

160–167 (GGAGVGKT) is an ATP binding site.

It belongs to the ATPase alpha/beta chains family. In terms of assembly, F-type ATPases have 2 components, CF(1) - the catalytic core - and CF(0) - the membrane proton channel. CF(1) has five subunits: alpha(3), beta(3), gamma(1), delta(1), epsilon(1). CF(0) has three main subunits: a(1), b(2) and c(9-12). The alpha and beta chains form an alternating ring which encloses part of the gamma chain. CF(1) is attached to CF(0) by a central stalk formed by the gamma and epsilon chains, while a peripheral stalk is formed by the delta and b chains.

It localises to the cell inner membrane. It catalyses the reaction ATP + H2O + 4 H(+)(in) = ADP + phosphate + 5 H(+)(out). Produces ATP from ADP in the presence of a proton gradient across the membrane. The catalytic sites are hosted primarily by the beta subunits. This Orientia tsutsugamushi (strain Ikeda) (Rickettsia tsutsugamushi) protein is ATP synthase subunit beta.